The chain runs to 405 residues: PP2A regulatory subunit TAP46 (405 aa).

2 disordered regions span residues 159-189 (ERRGRSTKASALSTPVESGEDDIPDDDSEEE) and 352-405 (ATTS…TPCG). Polar residues predominate over residues 165–174 (TKASALSTPV). Acidic residues-rich tracts occupy residues 176 to 189 (SGEDDIPDDDSEEE) and 367 to 377 (EDEEDDDEDEE). The segment covering 378–393 (AVMKARAFDDWKDDNP) has biased composition (basic and acidic residues).

This sequence belongs to the IGBP1/TAP42 family. In terms of assembly, interacts with the 36 kDa catalytic subunit (subunit C) of PP2A. Interacts with PP2A1 and PP2A2. Interacts with PP2A3, PPX1 and FYPP1. Interacts with FYPP3 and ABI5. Interacts with ATPK1/S6K1 and ATPK2/S6K2. Interacts with TIP41L. Phosphorylated by TOR kinase in vitro. As to expression, ubiquitous. Highly expressed in seed, and particularly in the embryo.

Its function is as follows. Involved in the positive regulation of the TOR signaling pathway. Acts as a negative regulator of PP2A catalytic activity. Plays a positive role in the ABA-regulated inhibition of germination, probably throught its interaction with ABI5. This is PP2A regulatory subunit TAP46 from Arabidopsis thaliana (Mouse-ear cress).